The primary structure comprises 674 residues: Kelch repeat and BTB domain-containing protein 6 (674 aa).

The segment at 1–28 is disordered; the sequence is MQSREDAPRSRRLASPRGGKRPKKIHKP. The span at 10–27 shows a compositional bias: basic residues; it reads SRRLASPRGGKRPKKIHK. Residues 63 to 138 form the BTB domain; the sequence is CDVTIEVVTP…CYTGRVSLSE (76 aa). 6 Kelch repeats span residues 386–435, 436–484, 486–523, 524–564, 567–616, and 642–673; these read AVCI…YLNG, YIYI…VIRD, LYAL…VFNE, EIYC…IIKH, KLLL…CLSA, and TEWD…RVAP. A disordered region spans residues 631–674; sequence TEEEEIPSESSTEWDLGGFSEPDSESGSSSSLSDDDFWVRVAPQ. Positions 668 to 671 match the ATG8 interaction motif (AIM) motif; that stretch reads WVRV.

Core component of a BCR3 (BTB-CUL3-RBX1) E3 ubiquitin ligase complex, also named Cul3-RING ubiquitin ligase complex CUL3(KBTBD6/7), composed of CUL3, RBX1, KBTBD6 and KBTBD7. Interacts with GABARAP; the interaction is direct and is required for the ubiquitination of TIAM1. Interacts with GABARAPL1, GABARAPL2 and MAP1LC3B; the interaction is direct.

The protein resides in the cytoplasm. Its subcellular location is the nucleus. Its pathway is protein modification; protein ubiquitination. In terms of biological role, as part of the CUL3(KBTBD6/7) E3 ubiquitin ligase complex functions as a substrate adapter for the RAC1 guanine exchange factor (GEF) TIAM1, mediating its 'Lys-48' ubiquitination and proteasomal degradation. By controlling this ubiquitination, regulates RAC1 signal transduction and downstream biological processes including the organization of the cytoskeleton, cell migration and cell proliferation. Ubiquitination of TIAM1 requires the membrane-associated protein GABARAP which may restrict locally the activity of the complex. The sequence is that of Kelch repeat and BTB domain-containing protein 6 from Homo sapiens (Human).